The following is a 446-amino-acid chain: GTPase Der (446 aa).

EngA-type G domains lie at 2 to 166 and 179 to 354; these read TVVA…PEAP and IRVS…RQYN. GTP contacts are provided by residues 8 to 15, 55 to 59, 118 to 121, 185 to 192, 232 to 236, and 297 to 300; these read GRPNVGKS, DTAGF, NKID, DTAGI, and NKWD. Positions 355-440 constitute a KH-like domain; that stretch reads QRVTTGIVNR…PIRLIFRPRQ (86 aa).

This sequence belongs to the TRAFAC class TrmE-Era-EngA-EngB-Septin-like GTPase superfamily. EngA (Der) GTPase family. As to quaternary structure, associates with the 50S ribosomal subunit.

Its function is as follows. GTPase that plays an essential role in the late steps of ribosome biogenesis. In Syntrophobacter fumaroxidans (strain DSM 10017 / MPOB), this protein is GTPase Der.